The chain runs to 285 residues: Golgi phosphoprotein 3-like (285 aa).

Positions 1–43 (MTTLTHRTRRTEVSKSCEKKIESEEDTNQERSPDNEDPGDSKD) are disordered. The segment covering 10–43 (RTEVSKSCEKKIESEEDTNQERSPDNEDPGDSKD) has biased composition (basic and acidic residues). A 1,2-diacyl-sn-glycero-3-phospho-(1D-myo-inositol 4-phosphate) is bound by residues Trp67 and Arg76. At Ser112 the chain carries Phosphoserine. A 1,2-diacyl-sn-glycero-3-phospho-(1D-myo-inositol 4-phosphate) contacts are provided by Arg157 and Arg160. Residues 176–187 (EKQNFLLFDMTT) are beta-hairpin required for oligomerization.

The protein belongs to the GOLPH3/VPS74 family. In terms of assembly, homooligomer. Does not interact MYO18; differs from GOLPH3 by its inability to interact with MYO18. May interact with ARF1.

The protein localises to the golgi apparatus. The protein resides in the golgi stack membrane. It is found in the trans-Golgi network membrane. Its function is as follows. Phosphatidylinositol-4-phosphate-binding protein that may antagonize the action of GOLPH3 which is required for the process of vesicle budding at the Golgi and anterograde transport to the plasma membrane. This is Golgi phosphoprotein 3-like (Golph3l) from Rattus norvegicus (Rat).